A 141-amino-acid chain; its full sequence is Cystatin (141 aa).

A signal peptide spans 1–26; the sequence is MVHSQLPVAGPLRLLCALLLLPSATM. Residues 29–129 form the Cystatin domain; it reads GGLSPRSVTD…CHFQVWSRPW (101 aa). The short motif at 73-77 is the Secondary area of contact element; it reads QVVSG. Intrachain disulfides connect Cys-91/Cys-107 and Cys-120/Cys-140.

This sequence belongs to the cystatin family. Expressed at a low level by the venom gland (at protein level).

The protein resides in the secreted. In terms of biological role, inhibits various C1 cysteine proteases including cathepsin L, papain and cathepsin B. This protein has no toxic activity and its function in the venom is unknown. It may play a role as a housekeeping or regulatory protein. The polypeptide is Cystatin (Pseudechis australis (Mulga snake)).